A 390-amino-acid chain; its full sequence is Enoyl-[acyl-carrier-protein] reductase [NADH], chloroplastic (390 aa).

A chloroplast-targeting transit peptide spans 1-74; it reads MAATAASSLQ…CKRPFSFSTR (74 aa). Residues leucine 53 and asparagine 170 each contribute to the NADP(+) site. Serine 239 serves as the catalytic Proton donor. Lysine 282 and serine 314 together coordinate NADP(+). Catalysis depends on lysine 282, which acts as the Lowers pKa of active site Tyr.

Belongs to the short-chain dehydrogenases/reductases (SDR) family. FabI subfamily. Homotetramer. In terms of tissue distribution, expressed in flowers and siliques and at lower levels in roots and leaves (at protein level).

It localises to the plastid. Its subcellular location is the chloroplast. The catalysed reaction is a 2,3-saturated acyl-[ACP] + NAD(+) = a (2E)-enoyl-[ACP] + NADH + H(+). It functions in the pathway lipid metabolism; fatty acid biosynthesis. With respect to regulation, inhibited by the phytotoxin cyperin and the synthetic antimicrobial compound triclosan. Its function is as follows. Catalyzes the NAD-dependent reduction of a carbon-carbon double bond in an enoyl moiety that is covalently linked to an acyl carrier protein (ACP). Catalyzes the last reduction step in the de novo synthesis cycle of fatty acids. Involved in the elongation cycle of fatty acids which are used in lipid metabolism. Required for normal plant growth. In Arabidopsis thaliana (Mouse-ear cress), this protein is Enoyl-[acyl-carrier-protein] reductase [NADH], chloroplastic (MOD1).